We begin with the raw amino-acid sequence, 87 residues long: Cell division topological specificity factor (87 aa).

This sequence belongs to the MinE family.

Its function is as follows. Prevents the cell division inhibition by proteins MinC and MinD at internal division sites while permitting inhibition at polar sites. This ensures cell division at the proper site by restricting the formation of a division septum at the midpoint of the long axis of the cell. The chain is Cell division topological specificity factor from Roseiflexus castenholzii (strain DSM 13941 / HLO8).